Here is a 475-residue protein sequence, read N- to C-terminus: MMQYSLKFNQAKVLVLGDVMLDRYWFGATNRISPEAPVPVVKVKDMEERAGGAANVAMNIASLNATVALHGLVGHDDAGCVLDMLLKNHHIQNHCITLDSHPTITKLRILSRHQQLLRLDFEESFHNVESSPLLAKLQQQITGYGALILSDYGKGTLAAVQQMIQIARQAKVPVLIDPKGTDFERYRGATLLTPNMAEFEAVVGACLNDNDIVSKGLKLINDLELSALLVTRSEKGMTLLRPNHPPFHLPTQAKEVYDVTGAGDTVISILATAIADGRPYEEACYLANAAAGIVVGKLGTSTVNATELENAIHHREETGFGIVTEERLKQFTKEAKNRGEKIVMTNGCFDILHPGHVSYLENARKLGDRLIVAVNCDQSVKRLKGESRPINSLSARMAILAGLASVDWVIAFEEDTPQRLISEILPDVLVKGGDYKPEQIVGCQEVWANGGNVKALNFEDGCSTTDVIKKIQAIR.

Residues 1 to 318 are ribokinase; the sequence is MMQYSLKFNQ…ENAIHHREET (318 aa). 195–198 serves as a coordination point for ATP; the sequence is NMAE. Asp264 is an active-site residue. Residues 344 to 475 form a cytidylyltransferase region; sequence MTNGCFDILH…DVIKKIQAIR (132 aa).

It in the N-terminal section; belongs to the carbohydrate kinase PfkB family. In the C-terminal section; belongs to the cytidylyltransferase family. Homodimer.

The catalysed reaction is D-glycero-beta-D-manno-heptose 7-phosphate + ATP = D-glycero-beta-D-manno-heptose 1,7-bisphosphate + ADP + H(+). The enzyme catalyses D-glycero-beta-D-manno-heptose 1-phosphate + ATP + H(+) = ADP-D-glycero-beta-D-manno-heptose + diphosphate. Its pathway is nucleotide-sugar biosynthesis; ADP-L-glycero-beta-D-manno-heptose biosynthesis; ADP-L-glycero-beta-D-manno-heptose from D-glycero-beta-D-manno-heptose 7-phosphate: step 1/4. It participates in nucleotide-sugar biosynthesis; ADP-L-glycero-beta-D-manno-heptose biosynthesis; ADP-L-glycero-beta-D-manno-heptose from D-glycero-beta-D-manno-heptose 7-phosphate: step 3/4. The protein operates within bacterial outer membrane biogenesis; LOS core biosynthesis. Catalyzes the phosphorylation of D-glycero-D-manno-heptose 7-phosphate at the C-1 position to selectively form D-glycero-beta-D-manno-heptose-1,7-bisphosphate. Functionally, catalyzes the ADP transfer from ATP to D-glycero-beta-D-manno-heptose 1-phosphate, yielding ADP-D-glycero-beta-D-manno-heptose. This is Bifunctional protein HldE from Haemophilus ducreyi (strain 35000HP / ATCC 700724).